A 362-amino-acid polypeptide reads, in one-letter code: Cobalt-precorrin-5B C(1)-methyltransferase (362 aa).

It belongs to the CbiD family.

The enzyme catalyses Co-precorrin-5B + S-adenosyl-L-methionine = Co-precorrin-6A + S-adenosyl-L-homocysteine. It participates in cofactor biosynthesis; adenosylcobalamin biosynthesis; cob(II)yrinate a,c-diamide from sirohydrochlorin (anaerobic route): step 6/10. Its function is as follows. Catalyzes the methylation of C-1 in cobalt-precorrin-5B to form cobalt-precorrin-6A. The sequence is that of Cobalt-precorrin-5B C(1)-methyltransferase from Burkholderia multivorans (strain ATCC 17616 / 249).